The following is a 332-amino-acid chain: D-lactate dehydrogenase (332 aa).

NAD(+) contacts are provided by residues 155-156 (RI), D175, 206-207 (VP), N212, and 233-235 (FAR). Active-site residues include R235 and E264. H296 (proton donor) is an active-site residue.

The protein belongs to the D-isomer specific 2-hydroxyacid dehydrogenase family. In terms of assembly, homodimer.

It catalyses the reaction (R)-lactate + NAD(+) = pyruvate + NADH + H(+). The polypeptide is D-lactate dehydrogenase (Lactiplantibacillus pentosus (Lactobacillus pentosus)).